The chain runs to 544 residues: Chaperonin GroEL (544 aa).

ATP-binding positions include 29-32 (TLGP), 86-90 (DGTTT), Gly413, 476-478 (NAA), and Asp492.

The protein belongs to the chaperonin (HSP60) family. Forms a cylinder of 14 subunits composed of two heptameric rings stacked back-to-back. Interacts with the co-chaperonin GroES.

The protein localises to the cytoplasm. It catalyses the reaction ATP + H2O + a folded polypeptide = ADP + phosphate + an unfolded polypeptide.. In terms of biological role, together with its co-chaperonin GroES, plays an essential role in assisting protein folding. The GroEL-GroES system forms a nano-cage that allows encapsulation of the non-native substrate proteins and provides a physical environment optimized to promote and accelerate protein folding. The chain is Chaperonin GroEL from Bacillus cereus.